We begin with the raw amino-acid sequence, 339 residues long: DNA-directed RNA polymerase subunit alpha (339 aa).

Positions 1–235 are alpha N-terminal domain (alpha-NTD); that stretch reads MVIQRNWQSL…DQLQLFINFE (235 aa). Positions 251–339 are alpha C-terminal domain (alpha-CTD); it reads FNRNLLRKVD…DLAKRLEEPF (89 aa).

Belongs to the RNA polymerase alpha chain family. In terms of assembly, homodimer. The RNAP catalytic core consists of 2 alpha, 1 beta, 1 beta' and 1 omega subunit. When a sigma factor is associated with the core the holoenzyme is formed, which can initiate transcription.

It catalyses the reaction RNA(n) + a ribonucleoside 5'-triphosphate = RNA(n+1) + diphosphate. In terms of biological role, DNA-dependent RNA polymerase catalyzes the transcription of DNA into RNA using the four ribonucleoside triphosphates as substrates. This Granulibacter bethesdensis (strain ATCC BAA-1260 / CGDNIH1) protein is DNA-directed RNA polymerase subunit alpha.